We begin with the raw amino-acid sequence, 320 residues long: tRNA pseudouridine synthase B (320 aa).

Residue Asp49 is the Nucleophile of the active site.

This sequence belongs to the pseudouridine synthase TruB family. Type 1 subfamily.

It catalyses the reaction uridine(55) in tRNA = pseudouridine(55) in tRNA. Its function is as follows. Responsible for synthesis of pseudouridine from uracil-55 in the psi GC loop of transfer RNAs. This is tRNA pseudouridine synthase B from Bartonella bacilliformis (strain ATCC 35685 / KC583 / Herrer 020/F12,63).